Consider the following 348-residue polypeptide: Anthranilate phosphoribosyltransferase (348 aa).

Residues G91, 94–95 (GD), T99, 101–104 (NIST), 119–127 (KHGNRSASG), and S131 each bind 5-phospho-alpha-D-ribose 1-diphosphate. G91 serves as a coordination point for anthranilate. S103 is a Mg(2+) binding site. N122 contacts anthranilate. Residue R177 participates in anthranilate binding. D236 and E237 together coordinate Mg(2+).

Belongs to the anthranilate phosphoribosyltransferase family. Homodimer. It depends on Mg(2+) as a cofactor.

The enzyme catalyses N-(5-phospho-beta-D-ribosyl)anthranilate + diphosphate = 5-phospho-alpha-D-ribose 1-diphosphate + anthranilate. The protein operates within amino-acid biosynthesis; L-tryptophan biosynthesis; L-tryptophan from chorismate: step 2/5. In terms of biological role, catalyzes the transfer of the phosphoribosyl group of 5-phosphorylribose-1-pyrophosphate (PRPP) to anthranilate to yield N-(5'-phosphoribosyl)-anthranilate (PRA). The polypeptide is Anthranilate phosphoribosyltransferase (Synechococcus elongatus (strain ATCC 33912 / PCC 7942 / FACHB-805) (Anacystis nidulans R2)).